A 1177-amino-acid chain; its full sequence is DNA-directed RNA polymerase subunit beta' (1177 aa).

Cysteine 60, cysteine 62, cysteine 75, and cysteine 78 together coordinate Zn(2+). Aspartate 450, aspartate 452, and aspartate 454 together coordinate Mg(2+). Zn(2+) is bound by residues cysteine 795, cysteine 869, cysteine 876, and cysteine 879.

This sequence belongs to the RNA polymerase beta' chain family. In terms of assembly, the RNAP catalytic core consists of 2 alpha, 1 beta, 1 beta' and 1 omega subunit. When a sigma factor is associated with the core the holoenzyme is formed, which can initiate transcription. The cofactor is Mg(2+). Requires Zn(2+) as cofactor.

It carries out the reaction RNA(n) + a ribonucleoside 5'-triphosphate = RNA(n+1) + diphosphate. Its function is as follows. DNA-dependent RNA polymerase catalyzes the transcription of DNA into RNA using the four ribonucleoside triphosphates as substrates. This is DNA-directed RNA polymerase subunit beta' from Clostridium botulinum (strain Alaska E43 / Type E3).